The sequence spans 96 residues: RNA-binding protein Hfq (96 aa).

A Sm domain is found at 9 to 68; that stretch reads DPYLNALRRERIPVSIYLVNGIKLQGQIESFDQFVILLKNTVNQMVYKHAISTVVPARSV. Positions 67–96 are disordered; the sequence is SVSHHNNSNNSNQQNYQQEQQTDSNVEKAE. Over residues 72-87 the composition is skewed to low complexity; sequence NNSNNSNQQNYQQEQQ.

This sequence belongs to the Hfq family. Homohexamer.

RNA chaperone that binds small regulatory RNA (sRNAs) and mRNAs to facilitate mRNA translational regulation in response to envelope stress, environmental stress and changes in metabolite concentrations. Also binds with high specificity to tRNAs. This Pasteurella multocida (strain Pm70) protein is RNA-binding protein Hfq.